Reading from the N-terminus, the 1556-residue chain is uncharacterized protein (1556 aa).

Residue Ser2 is modified to N-acetylserine. The span at 145-156 shows a compositional bias: basic and acidic residues; the sequence is NQLENRKSLERK. Positions 145–170 are disordered; it reads NQLENRKSLERKPSRKRRKKNSNVND. In terms of domain architecture, Helicase ATP-binding spans 378 to 583; the sequence is SGDYPVCAKG…MIMSYLKLHP (206 aa). 391–398 contributes to the ATP binding site; it reads EEMGLGKT. Ser810 is modified (phosphoserine). The disordered stretch occupies residues 810 to 850; sequence SEDEDEHMDERFGEKETSSGDESDREINGAKNHDNHNNDGM. Basic and acidic residues-rich tracts occupy residues 817-827 and 834-846; these read MDERFGEKETS and REIN…DNHN. The RING-type zinc finger occupies 1239-1277; sequence CSICLGEVEIGAIIKCGHYFCKSCILTWLRAHSKCPICK. Over residues 1297 to 1309 the composition is skewed to basic and acidic residues; it reads REKEIQEPRREGA. 2 disordered regions span residues 1297–1319 and 1508–1534; these read REKE…SNEN and EKSK…AKFE. Residues 1310-1319 show a composition bias toward low complexity; sequence DSSQDNSNEN. The Helicase C-terminal domain maps to 1363–1531; sequence KLISYLRLKS…ETDNEESDDA (169 aa). Residues 1508–1518 are compositionally biased toward basic and acidic residues; that stretch reads EKSKKGDKYDE. A compositionally biased stretch (acidic residues) spans 1519 to 1529; the sequence is AQDETDNEESD.

This sequence belongs to the SNF2/RAD54 helicase family.

It localises to the nucleus. Is probably involved in a pathway contributing to genomic integrity. This is an uncharacterized protein from Saccharomyces cerevisiae (strain ATCC 204508 / S288c) (Baker's yeast).